The chain runs to 59 residues: Large ribosomal subunit protein bL32 (59 aa).

Residues 1–16 are compositionally biased toward basic residues; it reads MAVPKRKTSPSKRGMR. The interval 1–59 is disordered; the sequence is MAVPKRKTSPSKRGMRRSADALKAPTYIEDKNSGELRRPHHIDLKTGMYRGRSVLPPKD. Residues 28-44 are compositionally biased toward basic and acidic residues; sequence IEDKNSGELRRPHHIDL.

It belongs to the bacterial ribosomal protein bL32 family.

The protein is Large ribosomal subunit protein bL32 of Bartonella quintana (strain Toulouse) (Rochalimaea quintana).